The sequence spans 99 residues: Orphan antixoxin protein TacA (99 aa).

Belongs to the TacA antitoxin family.

Putative antitoxin component of a toxin-antitoxin (TA) system; its cognate toxin (usually a tRNA acetylase) is unknown. This chain is Orphan antixoxin protein TacA, found in Haemophilus influenzae (strain ATCC 51907 / DSM 11121 / KW20 / Rd).